A 259-amino-acid chain; its full sequence is Expansin-B6 (259 aa).

The N-terminal stretch at 1 to 24 (MASSSHRYFALLALFAVSLKFCYC) is a signal peptide. An N-linked (GlcNAc...) asparagine glycan is attached at Asn-26. One can recognise an Expansin-like EG45 domain in the interval 52–160 (GGACGFAVAN…IRVECLYRRT (109 aa)). 3 disulfide bridges follow: Cys-55–Cys-82, Cys-85–Cys-155, and Cys-90–Cys-96. Positions 173 to 254 (YYISFVVEYE…NWKPNETYRS (82 aa)) constitute an Expansin-like CBD domain. The N-linked (GlcNAc...) asparagine glycan is linked to Asn-249.

This sequence belongs to the expansin family. Expansin B subfamily.

It is found in the secreted. The protein localises to the cell wall. It localises to the membrane. Its function is as follows. May cause loosening and extension of plant cell walls by disrupting non-covalent bonding between cellulose microfibrils and matrix glucans. This chain is Expansin-B6, found in Arabidopsis thaliana (Mouse-ear cress).